The following is a 286-amino-acid chain: Flagellar filament 33 kDa core protein (286 aa).

The protein belongs to the bacterial flagellin family. In terms of assembly, the flagellum consists of an outer layer composed of repeating units of FlaA around a core that contains several antigenically related polypeptides.

The protein localises to the periplasmic flagellum. Its subcellular location is the periplasm. In terms of biological role, component of the core of the flagella. The protein is Flagellar filament 33 kDa core protein of Treponema phagedenis.